Consider the following 373-residue polypeptide: Melanoma-associated antigen C2 (373 aa).

The disordered stretch occupies residues 1-102; it reads MPPVPGVPFR…QGPSQSPLSS (102 aa). The span at 40–60 shows a compositional bias: low complexity; sequence SSASSTLYLVFSPSSFSTSSS. Over residues 85 to 94 the composition is skewed to pro residues; it reads SSPPQGPPQG. The tract at residues 135-373 is interaction with TRIM28; it reads SSFTYTLDEK…VMSSNVSFSE (239 aa). An MAGE domain is found at 141–336; it reads LDEKVAELVE…SSFPSWYKDA (196 aa).

Interacts with TRIM28 and UBE2H. As to expression, not expressed in normal tissues, except in germ cells in the seminiferous tubules and in Purkinje cells of the cerebellum. Expressed in various tumors, including melanoma, lymphoma, as well as pancreatic cancer, mammary gland cancer, non-small cell lung cancer and liver cancer. In hepatocellular carcinoma, there is an inverse correlation between tumor differentiation and protein expression, i.e. the lower the differentiation, the higher percentage of expression.

It is found in the cytoplasm. The protein localises to the nucleus. Proposed to enhance ubiquitin ligase activity of RING-type zinc finger-containing E3 ubiquitin-protein ligases. In vitro enhances ubiquitin ligase activity of TRIM28 and stimulates p53/TP53 ubiquitination in presence of Ubl-conjugating enzyme UBE2H leading to p53/TP53 degradation. Proposed to act through recruitment and/or stabilization of the Ubl-conjugating enzymes (E2) at the E3:substrate complex. This Homo sapiens (Human) protein is Melanoma-associated antigen C2 (MAGEC2).